The following is a 388-amino-acid chain: Dauer abnormal formation protein 25 (388 aa).

3 ANK repeats span residues 40–69, 74–103, and 107–137; these read SGMS…DVND, TLYT…RMYL, and IGKT…DVIE. Cys-321, Cys-324, Cys-333, Cys-336, Cys-341, Cys-345, His-353, and Cys-357 together coordinate Zn(2+). Residues 321–357 form an MYND-type zinc finger; it reads CSVCGHPGAKKRCTQCKLAYCSQECQKFDWPIHKKVC.

In terms of tissue distribution, expressed in many ciliated sensory neurons.

Its subcellular location is the cell projection. It localises to the cilium. Functionally, may be involved in the trafficking and dendritic transport of signaling proteins, such as the receptor-type guanylate cyclases gcy-12 and daf-11, to the cilia. In ciliated sensory neurons, required for the calcium flux to the cytoplasm in response to onset and removal of a nitric oxide (NO) stimulus and is thereby required for the behavioral avoidance response to NO-producing organisms like P.aeruginosa. This Caenorhabditis elegans protein is Dauer abnormal formation protein 25 (daf-25).